A 98-amino-acid chain; its full sequence is NADH-ubiquinone oxidoreductase chain 4L (98 aa).

3 helical membrane-spanning segments follow: residues 1–21, 26–46, and 58–78; these read MSPM…GLAF, LLSA…ATAT, and ILPM…LAIL.

This sequence belongs to the complex I subunit 4L family.

The protein localises to the mitochondrion membrane. The catalysed reaction is a ubiquinone + NADH + 5 H(+)(in) = a ubiquinol + NAD(+) + 4 H(+)(out). Its function is as follows. Core subunit of the mitochondrial membrane respiratory chain NADH dehydrogenase (Complex I) which catalyzes electron transfer from NADH through the respiratory chain, using ubiquinone as an electron acceptor. Part of the enzyme membrane arm which is embedded in the lipid bilayer and involved in proton translocation. In Scyliorhinus canicula (Small-spotted catshark), this protein is NADH-ubiquinone oxidoreductase chain 4L (MT-ND4L).